The primary structure comprises 939 residues: Progesterone receptor (939 aa).

The span at 1–11 (MTERTGKDARA) shows a compositional bias: basic and acidic residues. The interval 1-174 (MTERTGKDAR…RSSQGAACPL (174 aa)) is AF3; mediates transcriptional activation (in isoform B). Positions 1–302 (MTERTGKDAR…AEQDAPAPGC (302 aa)) are disordered. Residues 1 to 572 (MTERTGKDAR…YSFESLPQKI (572 aa)) are modulating, Ala/Pro-rich. K7 participates in a covalent cross-link: Glycyl lysine isopeptide (Lys-Gly) (interchain with G-Cter in SUMO). A compositionally biased stretch (low complexity) spans 15-26 (AGGAPSPAPAAE). At S20 the chain carries Phosphoserine. Residues 27 to 36 (PESRRRDGGR) are compositionally biased toward basic and acidic residues. The span at 49–67 (AAAAAAAAAAASAAPSAPS) shows a compositional bias: low complexity. S141 is subject to Phosphoserine. The interval 175–314 (MSRPEGKAGD…LATTMMDFIH (140 aa)) is mediates transcriptional transrepression (in isoform A). The short motif at 193–197 (KGPPR) is the Nuclear localization signal element. S200 carries the post-translational modification Phosphoserine. 2 stretches are compositionally biased toward low complexity: residues 211–230 (GAHAWPGAAGKAATQPAALG) and 257–278 (PAAAAGAAPAAPGTAPGGTAPV). The residue at position 303 (S303) is a Phosphoserine; by MAPK1. S349 is modified (phosphoserine; by MAPK). K392 participates in a covalent cross-link: Glycyl lysine isopeptide (Lys-Gly) (interchain with G-Cter in SUMO); alternate. A Glycyl lysine isopeptide (Lys-Gly) (interchain with G-Cter in ubiquitin); alternate cross-link involves residue K392. Phosphoserine; by CDK2 is present on S404. The segment at 463 to 552 (PALECVLYKA…VYQPYLNYLR (90 aa)) is AF1; mediates transcriptional activation. K537 participates in a covalent cross-link: Glycyl lysine isopeptide (Lys-Gly) (interchain with G-Cter in SUMO). 2 consecutive NR C4-type zinc fingers follow at residues 573-593 (CLICGDEASGCHYGVLTCGSC) and 609-633 (CAGRNDCIVDKIRRKNCPACRLRKC). The nuclear receptor DNA-binding region spans 573–645 (CLICGDEASG…AGMVLGGRKF (73 aa)). A Phosphoserine modification is found at S682. Residues 685–919 (QDIQLIPPLI…EFPEMMSEVI (235 aa)) form the NR LBD domain. Positions 693–939 (LINLLMSIEP…MVKPLLFHKK (247 aa)) are AF2; mediates transcriptional activation.

The protein belongs to the nuclear hormone receptor family. NR3 subfamily. In terms of assembly, interacts with SMARD1 and UNC45A. Interacts with CUEDC2; the interaction promotes ubiquitination, decreases sumoylation, and represses transcriptional activity. Interacts with PIAS3; the interaction promotes sumoylation of PR in a hormone-dependent manner, inhibits DNA-binding, and alters nuclear export. Interacts with SP1; the interaction requires ligand-induced phosphorylation on Ser-349 by ERK1/2-MAPK. Interacts with PRMT2. Isoform A interacts with NCOR2. Isoform B (but not isoform A) interacts with NCOA2 and NCOA1. Isoform B (but not isoform A) interacts with KLF9. Interacts with GTF2B. In terms of processing, phosphorylated on multiple serine sites. Several of these sites are hormone-dependent. Phosphorylation on Ser-303 occurs preferentially on isoform B, is highly hormone-dependent and modulates ubiquitination and sumoylation on Lys-392. Phosphorylation on Ser-303 and Ser-349 also requires induction by hormone. Basal phosphorylation on Ser-200 and Ser-404 is increased in response to progesterone and can be phosphorylated in vitro by the CDK2-A1 complex. Increased levels of phosphorylation on Ser-404 also in the presence of EGF, heregulin, IGF, PMA and FBS. Phosphorylation at this site by CDK2 is ligand-independent, and increases nuclear translocation and transcriptional activity. Phosphorylation at Ser-303, but not at Ser-200, is impaired during the G(2)/M phase of the cell cycle. Phosphorylation on Ser-349 by ERK1/2 MAPK is required for interaction with SP1. Sumoylation is hormone-dependent and represses transcriptional activity. Sumoylation on all three sites is enhanced by PIAS3. Desumoylated by SENP1. Sumoylation on Lys-392, the main site of sumoylation, is repressed by ubiquitination on the same site, and modulated by phosphorylation at Ser-303. Post-translationally, ubiquitination is hormone-dependent and represses sumoylation on the same site. Promoted by MAPK-mediated phosphorylation on Ser-303. In terms of processing, palmitoylated by ZDHHC7 and ZDHHC21. Palmitoylation is required for plasma membrane targeting and for rapid intracellular signaling via ERK and AKT kinases and cAMP generation. In terms of tissue distribution, expressed in mammary gland and uterus.

The protein localises to the nucleus. It localises to the cytoplasm. Its function is as follows. The steroid hormones and their receptors are involved in the regulation of eukaryotic gene expression and affect cellular proliferation and differentiation in target tissues. Depending on the isoform, progesterone receptor functions as a transcriptional activator or repressor. Ligand-dependent transdominant repressor of steroid hormone receptor transcriptional activity including repression of its isoform B, MR and ER. Transrepressional activity may involve recruitment of corepressor NCOR2. Functionally, transcriptional activator of several progesteron-dependent promoters in a variety of cell types. Involved in activation of SRC-dependent MAPK signaling on hormone stimulation. The chain is Progesterone receptor (PGR) from Canis lupus familiaris (Dog).